Consider the following 236-residue polypeptide: CHD1 helical C-terminal domain containing protein 1 (236 aa).

Residues 44-145 (LDQDTFKTCK…SSQPAKFLVT (102 aa)) form a CHD1 helical C-terminal domain (CHCT) region. The segment at 184–236 (LSNMQTPGQGSPLPGQPRSQDHVKKDSLRELSQKPKLKRKRIKEAPETPETEP) is disordered. The span at 202-216 (SQDHVKKDSLRELSQ) shows a compositional bias: basic and acidic residues.

The protein resides in the cytoplasm. Its subcellular location is the nucleus. In terms of biological role, may play a role in regulation of apoptosis. This is CHD1 helical C-terminal domain containing protein 1 from Homo sapiens (Human).